A 359-amino-acid polypeptide reads, in one-letter code: Hyaluronan and proteoglycan link protein 3 (359 aa).

The N-terminal stretch at 1–17 (MSLLFLVLLSPFPCVLG) is a signal peptide. Residues 48 to 164 (KLVVETTEES…ESGLVELELR (117 aa)) form the Ig-like V-type domain. Disulfide bonds link C70/C146, C188/C259, C212/C233, C286/C355, and C311/C332. Link domains are found at residues 166-261 (VVFP…FCFA) and 266-357 (GRVY…YCYV).

It belongs to the HAPLN family.

The protein localises to the secreted. Its subcellular location is the extracellular space. It localises to the extracellular matrix. Its function is as follows. May function in hyaluronic acid binding. The protein is Hyaluronan and proteoglycan link protein 3 (Hapln3) of Mus musculus (Mouse).